The following is a 297-amino-acid chain: Glycerol-3-phosphate dehydrogenase [NAD(P)+] (297 aa).

NADPH is bound by residues Trp-11, Arg-33, and Lys-79. Residues Lys-79, Gly-107, and Ser-109 each contribute to the sn-glycerol 3-phosphate site. Ala-111 lines the NADPH pocket. Sn-glycerol 3-phosphate contacts are provided by Lys-161, Asp-214, Ser-224, Arg-225, and Asn-226. Catalysis depends on Lys-161, which acts as the Proton acceptor. Arg-225 serves as a coordination point for NADPH. NADPH-binding residues include Val-249 and Glu-251.

The protein belongs to the NAD-dependent glycerol-3-phosphate dehydrogenase family.

It is found in the cytoplasm. It catalyses the reaction sn-glycerol 3-phosphate + NAD(+) = dihydroxyacetone phosphate + NADH + H(+). The catalysed reaction is sn-glycerol 3-phosphate + NADP(+) = dihydroxyacetone phosphate + NADPH + H(+). It functions in the pathway membrane lipid metabolism; glycerophospholipid metabolism. In terms of biological role, catalyzes the reduction of the glycolytic intermediate dihydroxyacetone phosphate (DHAP) to sn-glycerol 3-phosphate (G3P), the key precursor for phospholipid synthesis. The polypeptide is Glycerol-3-phosphate dehydrogenase [NAD(P)+] (Campylobacter jejuni subsp. jejuni serotype O:2 (strain ATCC 700819 / NCTC 11168)).